Reading from the N-terminus, the 377-residue chain is 26S proteasome non-ATPase regulatory subunit 4 (377 aa).

The 184-residue stretch at 5–188 folds into the VWFA domain; sequence STMVCVDNSE…LADALISSPI (184 aa). Lysine 122 participates in a covalent cross-link: Glycyl lysine isopeptide (Lys-Gly) (interchain with G-Cter in SUMO2). The segment at 197–262 is interaction with UBQLN1; sequence LGLGASDFEF…TEDSDDALLK (66 aa). The region spanning 211 to 230 is the UIM 1 domain; sequence SADPELALALRVSMEEQRQR. Positions 216–220 are essential for ubiquitin-binding; it reads LALAL. Over residues 224 to 237 the composition is skewed to basic and acidic residues; that stretch reads MEEQRQRQEEEARR. The disordered stretch occupies residues 224 to 255; the sequence is MEEQRQRQEEEARRAAAASAAEAGIATTGTED. 2 positions are modified to phosphothreonine: threonine 250 and threonine 253. A phosphoserine mark is found at serine 256 and serine 266. One can recognise a UIM 2 domain in the interval 282-301; it reads TEEEQIAYAMQMSLQGAEFG. An essential for ubiquitin-binding region spans residues 287–291; it reads IAYAM. Disordered regions lie at residues 300–327 and 341–377; these read FGQAESADIDASSAMDTSEPAKEEDDYD and NLPGVDPNNEAIRNAMGSLASQATKDGKKDKKEEDKK. Residues serine 358 and serine 361 each carry the phosphoserine modification. A compositionally biased stretch (basic and acidic residues) spans 365–377; sequence KDGKKDKKEEDKK.

It belongs to the proteasome subunit S5A family. In terms of assembly, component of the 19S proteasome regulatory particle complex. The 26S proteasome consists of a 20S core particle (CP) and two 19S regulatory subunits (RP). The regulatory particle is made of a lid composed of 9 subunits, a base containing 6 ATPases and few additional components including PSMD4. Interacts with NUB1. Interacts with SQSTM1. Interacts with UBQLN4. Interacts with UBE3A. Interacts with UBQLN1 (via ubiquitin-like domain). Interacts with DDI2.

In terms of biological role, component of the 26S proteasome, a multiprotein complex involved in the ATP-dependent degradation of ubiquitinated proteins. This complex plays a key role in the maintenance of protein homeostasis by removing misfolded or damaged proteins, which could impair cellular functions, and by removing proteins whose functions are no longer required. Therefore, the proteasome participates in numerous cellular processes, including cell cycle progression, apoptosis, or DNA damage repair. PSMD4 acts as an ubiquitin receptor subunit through ubiquitin-interacting motifs and selects ubiquitin-conjugates for destruction. Displays a preferred selectivity for longer polyubiquitin chains. In Homo sapiens (Human), this protein is 26S proteasome non-ATPase regulatory subunit 4 (PSMD4).